A 299-amino-acid polypeptide reads, in one-letter code: Oxygen-dependent coproporphyrinogen-III oxidase (299 aa).

Ser92 contributes to the substrate binding site. 2 residues coordinate a divalent metal cation: His96 and His106. His106 functions as the Proton donor in the catalytic mechanism. Substrate is bound at residue 108-110 (NVR). Residues His145 and His175 each coordinate a divalent metal cation. The interval 240-275 (YVEFNLVWDRGTLFGLQTGGRTESILMSMPPLVRWE) is important for dimerization. Residue 258–260 (GGR) coordinates substrate.

This sequence belongs to the aerobic coproporphyrinogen-III oxidase family. Homodimer. The cofactor is a divalent metal cation.

Its subcellular location is the cytoplasm. It catalyses the reaction coproporphyrinogen III + O2 + 2 H(+) = protoporphyrinogen IX + 2 CO2 + 2 H2O. Its pathway is porphyrin-containing compound metabolism; protoporphyrin-IX biosynthesis; protoporphyrinogen-IX from coproporphyrinogen-III (O2 route): step 1/1. Involved in the heme biosynthesis. Catalyzes the aerobic oxidative decarboxylation of propionate groups of rings A and B of coproporphyrinogen-III to yield the vinyl groups in protoporphyrinogen-IX. The sequence is that of Oxygen-dependent coproporphyrinogen-III oxidase from Salmonella newport (strain SL254).